Here is a 158-residue protein sequence, read N- to C-terminus: Ribonuclease H (158 aa).

An RNase H type-1 domain is found at 9–155 (AFKPVELYTD…CDKLAVAAYQ (147 aa)). Residues Asp18, Glu58, Asp80, and Asp147 each coordinate Mg(2+).

This sequence belongs to the RNase H family. Monomer. It depends on Mg(2+) as a cofactor.

The protein resides in the cytoplasm. The enzyme catalyses Endonucleolytic cleavage to 5'-phosphomonoester.. Its function is as follows. Endonuclease that specifically degrades the RNA of RNA-DNA hybrids. This Rhodopirellula baltica (strain DSM 10527 / NCIMB 13988 / SH1) protein is Ribonuclease H.